We begin with the raw amino-acid sequence, 757 residues long: uncharacterized protein (757 aa).

The S1 motif domain maps to 640 to 709; that stretch reads GMILEGVVSN…ARKRIALTMR (70 aa). Basic and acidic residues predominate over residues 710–741; the sequence is LDDEPGGAKHKMPSENRSRERTAGRKPQRNDR. The interval 710–757 is disordered; sequence LDDEPGGAKHKMPSENRSRERTAGRKPQRNDRAPANSAMADAFAKLKR.

This is an uncharacterized protein from Neisseria meningitidis serogroup A / serotype 4A (strain DSM 15465 / Z2491).